The primary structure comprises 1115 residues: Receptor-type tyrosine-protein phosphatase H (1115 aa).

Residues 1–27 (MAGAGGGLGVWGNLVLLGLCSWTGARA) form the signal peptide. The Extracellular portion of the chain corresponds to 28 to 754 (PAPNPGRNLT…VVCHTESAGV (727 aa)). 8 Fibronectin type-III domains span residues 32 to 121 (PGRN…APNP), 122 to 209 (VRNL…TAHN), 210 to 299 (PVRN…APNP), 300 to 387 (VRNL…TAPN), 388 to 477 (PVRN…VPNA), 478 to 563 (VTSL…TAAT), 564 to 666 (APNE…TYPD), and 665 to 749 (PDTV…VCHT). N-linked (GlcNAc...) asparagine glycans are attached at residues N35, N83, N172, N256, N285, N350, N434, N468, N556, and N642. The helical transmembrane segment at 755 to 775 (IAGAFVGILLFLILVGLLIFF) threads the bilayer. At 776-1115 (LKRRNKKKQQ…AAIQAHKLEV (340 aa)) the chain is on the cytoplasmic side. The 260-residue stretch at 820–1079 (FADEYQQLSL…VFLHQCILRF (260 aa)) folds into the Tyrosine-protein phosphatase domain. C1020 functions as the Phosphocysteine intermediate in the catalytic mechanism. A phosphotyrosine mark is found at Y1094 and Y1102.

This sequence belongs to the protein-tyrosine phosphatase family. Receptor class 3 subfamily. As to quaternary structure, homodimer; disulfide-linked. Interacts with LCK. Interacts (phosphorylated form) with GRB2 (via SH2 domain). Interacts (phosphorylated form) with FYN (via SH2 domain). Interacts (via extracellular domain) with CEACAM20 (via extracellular domain); the interaction dephosphorylates CEACAM20. Expressed at high levels in the brain, spleen and liver and at lower levels in the heart and stomach. Expressed in pancreatic and colorectal cancer cells, but not in normal pancreas or colon. Expression in hepatocellular carcinoma is related to the differentiation status of the tumor and expression is inversely related to tumor aggressiveness.

It is found in the cell projection. Its subcellular location is the microvillus membrane. The protein localises to the apical cell membrane. The protein resides in the cytoplasm. The catalysed reaction is O-phospho-L-tyrosyl-[protein] + H2O = L-tyrosyl-[protein] + phosphate. Regulated by reversible dimerization. Dimerization reduces its catalytic activity. Protein phosphatase that may contribute to contact inhibition of cell growth and motility by mediating the dephosphorylation of focal adhesion-associated substrates and thus negatively regulating integrin-promoted signaling processes. Induces apoptotic cell death by at least two distinct mechanisms: inhibition of cell survival signaling mediated by PI 3-kinase, Akt, and ILK and activation of a caspase-dependent proapoptotic pathway. Inhibits the basal activity of LCK and its activation in response to TCR stimulation and TCR-induced activation of MAP kinase and surface expression of CD69. Inhibits TCR-induced tyrosine phosphorylation of LAT and ZAP70. Inhibits both basal activity of DOK1 and its CD2-induced tyrosine phosphorylation. Induces dephosphorylation of BCAR1, focal adhesion kinase and SRC. Reduces migratory activity of activity of Jurkat cells. Reduces tyrosine phosphorylation of CEACAM20 and thereby contributes to suppress the intestinal immune response CEACAM20. In Homo sapiens (Human), this protein is Receptor-type tyrosine-protein phosphatase H (PTPRH).